An 82-amino-acid polypeptide reads, in one-letter code: MRLVVCLVFLASFALVCQGQVYKGGYTRPIPRPPPFVRPLPGGPIGPYNGCPVSCRGISFSQARSCCSRLGRCCHVGKGYSG.

A signal peptide spans 1 to 19 (MRLVVCLVFLASFALVCQG). A Pyrrolidone carboxylic acid modification is found at Gln-20. Disulfide bonds link Cys-51/Cys-66, Cys-55/Cys-73, and Cys-67/Cys-74. Position 81 is a serine amide (Ser-81).

The N-terminus forms pyrrolidone carboxylic acid. Higher expression in hemocytes and to a lesser extent in heart, testis, gills, intestine, lymphoid organ and hepatopancreas. Traces in eyes and subcuticular epithelium. Not present in the brain.

It localises to the cytoplasmic granule. Functionally, antibacterial activity against M.luteus and E.coli bacteria. Antifungal activity against N.crassa and F.oxysporum. Presents chitin-binding activity. This is Penaeidin-3a from Penaeus vannamei (Whiteleg shrimp).